Reading from the N-terminus, the 81-residue chain is MKKLLIMLIRFYQRYISPLKPPTCRFTPTCSNYFIQALEKHGLLKGTFLGLRRILRCNPLSKGGYDPVPEEFSFKPRRRWS.

It belongs to the UPF0161 family.

Its subcellular location is the cell inner membrane. Its function is as follows. Could be involved in insertion of integral membrane proteins into the membrane. This Thermotoga maritima (strain ATCC 43589 / DSM 3109 / JCM 10099 / NBRC 100826 / MSB8) protein is Putative membrane protein insertion efficiency factor.